The chain runs to 420 residues: WD repeat-containing protein jip5 (420 aa).

WD repeat units lie at residues 9 to 48, 72 to 111, 117 to 158, 221 to 262, 271 to 314, and 318 to 355; these read PLSADLFSQALHPKEPVVSVGLSSGHVQTFRLPSDEVDSD, RHKGSCRCLGFGVDGEMLYSAGTDGLVKAAKAETGVVENK, DKNG…SKVS, VSSV…DQDE, GGGE…VVSE, and DETEGVVGLGFDVEGRMVSGGGQIVKVWHEAVDSGDGV. The disordered stretch occupies residues 39-63; the sequence is RLPSDEVDSDDDGASTSSSRTGRGH. The segment at 350–420 is disordered; that stretch reads DSGDGVNGNE…QAVMAFHDLD (71 aa). Positions 368–387 are enriched in acidic residues; the sequence is DDSDEDSDDGDDDDDSGDSD. Residues 394-406 show a composition bias toward basic residues; that stretch reads DARKKRKKGKTPK.

It belongs to the WD repeat WDR55 family.

The protein localises to the nucleus. Its subcellular location is the nucleolus. The protein is WD repeat-containing protein jip5 (jip5) of Aspergillus terreus (strain NIH 2624 / FGSC A1156).